The primary structure comprises 1338 residues: P-type sodium-transporting ATPase4 (1338 aa).

The tract at residues 1 to 106 is disordered; sequence MAARASADKL…KSISSVSQMH (106 aa). Residues 55-69 show a composition bias toward basic and acidic residues; sequence AEEKVAGHDGESPRR. The segment covering 91-104 has biased composition (polar residues); it reads GHSQLGKSISSVSQ. Helical transmembrane passes span 229–249, 255–275, 418–438, 456–476, 985–1005, 1068–1088, 1261–1281, and 1288–1308; these read IFIQ…AIAS, WVEG…ATYM, LGGM…VVAI, IVLV…PMVV, FVCF…IAIA, IFEA…CTGV, MHLA…VPGI, and CALP…NLIL.

This sequence belongs to the cation transport ATPase (P-type) (TC 3.A.3) family.

It is found in the cell membrane. It carries out the reaction Na(+)(in) + ATP + H2O = Na(+)(out) + ADP + phosphate + H(+). Its activity is regulated as follows. Inhibited by cipargamin, a synthetic spiroindolone. Inhibited by pyrazoleamide PA21A050, structurally unrelated to the spiroindolones. Inhibited by (+)-SJ733, a dihydroisoquinolone compound. Its function is as follows. Sodium-exporting ATPase. Required for the extrusion of Na(+) from the parasites to maintain a low cytosolic concentration of Na(+). Required for maintaining the viability of extracellular parasites but not for intracellular growth, egress or invasion. Involved in parasite virulence. In Toxoplasma gondii (strain ATCC 50861 / VEG), this protein is P-type sodium-transporting ATPase4.